A 620-amino-acid chain; its full sequence is uncharacterized protein (620 aa).

Residues 324 to 586 (RRYVTIAIIK…HPWEKGIYPT (263 aa)) enclose the Radical SAM core domain. [4Fe-4S] cluster-binding residues include Cys-338, Cys-342, and Cys-345. Residue Lys-552 is modified to N6-(pyridoxal phosphate)lysine.

Belongs to the radical SAM superfamily. KamA family. The cofactor is [4Fe-4S] cluster. It depends on pyridoxal 5'-phosphate as a cofactor.

This is an uncharacterized protein from Methanocaldococcus jannaschii (strain ATCC 43067 / DSM 2661 / JAL-1 / JCM 10045 / NBRC 100440) (Methanococcus jannaschii).